Reading from the N-terminus, the 2462-residue chain is Non-reducing polyketide synthase ausA (2462 aa).

The interval Val-16 to Lys-253 is N-terminal acylcarrier protein transacylase domain (SAT). One can recognise a Ketosynthase family 3 (KS3) domain in the interval Ser-385–Glu-801. Catalysis depends on for beta-ketoacyl synthase activity residues Cys-550, His-685, and His-724. The tract at residues Leu-904–Ala-1208 is malonyl-CoA:ACP transacylase (MAT) domain. Ser-991 acts as the For acyl/malonyl transferase activity in catalysis. Residues His-1274–Ala-1403 form an N-terminal hotdog fold region. One can recognise a PKS/mFAS DH domain in the interval His-1274–Lys-1581. A product template (PT) domain region spans residues Gly-1277–Leu-1580. His-1307 acts as the Proton acceptor; for dehydratase activity in catalysis. The interval Ser-1431 to Lys-1581 is C-terminal hotdog fold. Asp-1489 serves as the catalytic Proton donor; for dehydratase activity. The 78-residue stretch at Val-1613–Ser-1690 folds into the Carrier domain. Ser-1650 is subject to O-(pantetheine 4'-phosphoryl)serine. Positions Gln-1850–Asn-2083 are methyltransferase (CMeT) domain. Positions Thr-2112–Val-2462 are thioesterase (TE) domain. Active-site for thioesterase activity residues include Ser-2235, Asp-2398, and His-2430.

The catalysed reaction is 3 malonyl-CoA + acetyl-CoA + 2 S-adenosyl-L-methionine = 3,5-dimethylorsellinate + 2 S-adenosyl-L-homocysteine + 3 CO2 + 4 CoA. It functions in the pathway secondary metabolite biosynthesis; terpenoid biosynthesis. Non-reducing polyketide synthase; part of the gene cluster that mediates the biosynthesis of calidodehydroaustin, a fungal meroterpenoid. The first step of the pathway is the synthesis of 3,5-dimethylorsellinic acid by the polyketide synthase ausA. 3,5-dimethylorsellinic acid is then prenylated by the polyprenyl transferase ausN. Further epoxidation by the FAD-dependent monooxygenase ausM and cyclization by the probable terpene cyclase ausL lead to the formation of protoaustinoid A. Protoaustinoid A is then oxidized to spiro-lactone preaustinoid A3 by the combined action of the FAD-binding monooxygenases ausB and ausC, and the dioxygenase ausE. Acid-catalyzed keto-rearrangement and ring contraction of the tetraketide portion of preaustinoid A3 by ausJ lead to the formation of preaustinoid A4. The aldo-keto reductase ausK, with the help of ausH, is involved in the next step by transforming preaustinoid A4 into isoaustinone which is in turn hydroxylated by the P450 monooxygenase ausI to form austinolide. The cytochrome P450 monooxygenase ausG modifies austinolide to austinol. Austinol is further acetylated to austin by the O-acetyltransferase ausP, which spontaneously changes to dehydroaustin. The cytochrome P450 monooxygenase ausR then converts dehydroaustin is into 7-dehydrodehydroaustin. The hydroxylation catalyzed by ausR permits the O-acetyltransferase ausQ to add an additional acetyl group to the molecule, leading to the formation of acetoxydehydroaustin. The short chain dehydrogenase ausT catalyzes the reduction of the double bond present between carbon atoms 1 and 2 to convert 7-dehydrodehydroaustin into 1,2-dihydro-7-hydroxydehydroaustin. AusQ catalyzes not only an acetylation reaction but also the addition of the PKS ausV diketide product to 1,2-dihydro-7-hydroxydehydroaustin, forming precalidodehydroaustin. Finally, the iron/alpha-ketoglutarate-dependent dioxygenase converts precalidodehydroaustin into calidodehydroaustin. This Aspergillus calidoustus protein is Non-reducing polyketide synthase ausA.